A 335-amino-acid polypeptide reads, in one-letter code: Mesoderm-specific transcript homolog protein (335 aa).

The next 3 membrane-spanning stretches (helical) occupy residues 13-33, 88-108, and 266-286; these read WWVQVGLLAVPLLAAYLHIPP, IWEGLTLSFHRVIALDFLGFG, and VGALASVSIPIHFIYGPLDPV. The AB hydrolase-1 domain occupies 71–310; it reads IVVLLHGFPT…PRSTVSILDD (240 aa). An RVIALD motif is present at residues 98 to 103; sequence RVIALD.

This sequence belongs to the AB hydrolase superfamily. As to expression, no detectable transcripts during preimplantation development. Isoform 1 was not detected in either in vitro-matured oocytes (IVF) or parthenogenetically activated (PA) blastocyst. Isoform 2 was expressed in IVF and PA blastocysts.

The protein localises to the endoplasmic reticulum membrane. The chain is Mesoderm-specific transcript homolog protein (MEST) from Bos taurus (Bovine).